The primary structure comprises 93 residues: Alpha-defensin 26 (93 aa).

A signal peptide spans 1 to 19 (MKTLVLLSALFLLAFQVQA). Residues 20-58 (DPIQNTDEETNTEVQPQEEDQAVSVSFGNPEGSDLQEES) constitute a propeptide that is removed on maturation. Residues 24–55 (NTDEETNTEVQPQEEDQAVSVSFGNPEGSDLQ) are disordered. A compositionally biased stretch (acidic residues) spans 25–40 (TDEETNTEVQPQEEDQ). Intrachain disulfides connect cysteine 64-cysteine 92, cysteine 66-cysteine 81, and cysteine 71-cysteine 91.

It belongs to the alpha-defensin family.

The protein resides in the secreted. In terms of biological role, may have microbicidal activities. The polypeptide is Alpha-defensin 26 (Defa26) (Mus musculus (Mouse)).